A 612-amino-acid chain; its full sequence is C4-dicarboxylate transport sensor protein DctB (612 aa).

The next 2 membrane-spanning stretches (helical) occupy residues 23–43 (SLVI…YFAE) and 292–312 (VLLI…LLTL). A coiled-coil region spans residues 328 to 376 (KRQLEERVLERTRELENANAQLQQEVHEREQAQRELMRAQDEVVQAGKL). The Histidine kinase domain maps to 385-599 (SISHELNQPL…VVRLHLLPGV (215 aa)). His388 carries the phosphohistidine; by autocatalysis modification.

In terms of processing, autophosphorylated.

It is found in the cell inner membrane. The enzyme catalyses ATP + protein L-histidine = ADP + protein N-phospho-L-histidine.. Member of the two-component regulatory system DctB/DctD, which regulates C4-dicarboxylate transport via regulation of expression of the dctPQM operon and dctA. DctB functions as a membrane-associated protein kinase that phosphorylates DctD in response to environmental signals. The polypeptide is C4-dicarboxylate transport sensor protein DctB (Pseudomonas aeruginosa (strain ATCC 15692 / DSM 22644 / CIP 104116 / JCM 14847 / LMG 12228 / 1C / PRS 101 / PAO1)).